A 115-amino-acid chain; its full sequence is MITLFLILCYFILIFNIIVPAISEKMRRERAAYVNYKRLNKNFICVDDRLFSYNFTTSGIKAKVAVNKNVPIPCSKINEVNNKDVDTLYCDKDRDDIPGFARSCYRAYSDLFFTT.

Residues 1-21 (MITLFLILCYFILIFNIIVPA) traverse the membrane as a helical; Signal-anchor for type III membrane protein segment.

The protein belongs to the orthopoxvirus OPG147 family. As to quaternary structure, part of a stable entry-fusion complex (EFC) which is at least composed of proteins OPG143, OPG147, OPG155, OPG086, OPG094, OPG107, OPG104, and OPG099. Formation of the viral membrane is necessary for the assembly of the complex. Contains two intramolecular disulfide bonds. They are created by the viral disulfide bond formation pathway, a poxvirus-specific pathway that operates on the cytoplasmic side of the MV membranes.

The protein localises to the virion membrane. Envelope protein part of the entry-fusion complex responsible for the virus membrane fusion with host cell membrane during virus entry. Also plays a role in cell-cell fusion (syncytium formation). The polypeptide is Virion membrane protein OPG147 (OPG147) (Monkeypox virus).